The primary structure comprises 514 residues: 2,3-bisphosphoglycerate-independent phosphoglycerate mutase (514 aa).

Residues Asp14 and Ser64 each contribute to the Mn(2+) site. Catalysis depends on Ser64, which acts as the Phosphoserine intermediate. Substrate is bound by residues His125, 155 to 156 (RD), Arg187, Arg193, 263 to 266 (RADR), and Lys336. Asp403, His407, Asp444, His445, and His463 together coordinate Mn(2+).

It belongs to the BPG-independent phosphoglycerate mutase family. In terms of assembly, monomer. Mn(2+) serves as cofactor.

It carries out the reaction (2R)-2-phosphoglycerate = (2R)-3-phosphoglycerate. Its pathway is carbohydrate degradation; glycolysis; pyruvate from D-glyceraldehyde 3-phosphate: step 3/5. Its function is as follows. Catalyzes the interconversion of 2-phosphoglycerate and 3-phosphoglycerate. This Enterobacter sp. (strain 638) protein is 2,3-bisphosphoglycerate-independent phosphoglycerate mutase.